The sequence spans 156 residues: 3-hydroxyacyl-[acyl-carrier-protein] dehydratase FabZ (156 aa).

H61 is an active-site residue.

This sequence belongs to the thioester dehydratase family. FabZ subfamily.

It is found in the cytoplasm. The catalysed reaction is a (3R)-hydroxyacyl-[ACP] = a (2E)-enoyl-[ACP] + H2O. Functionally, involved in unsaturated fatty acids biosynthesis. Catalyzes the dehydration of short chain beta-hydroxyacyl-ACPs and long chain saturated and unsaturated beta-hydroxyacyl-ACPs. The protein is 3-hydroxyacyl-[acyl-carrier-protein] dehydratase FabZ of Acaryochloris marina (strain MBIC 11017).